A 315-amino-acid polypeptide reads, in one-letter code: O-antigen chain rhamnosyltransferase WbaN (315 aa).

This sequence belongs to the glycosyltransferase 2 family.

The enzyme catalyses alpha-D-galactosyl-di-trans,octa-cis-undecaprenyl diphosphate + dTDP-beta-L-rhamnose = alpha-L-rhamnosyl-(1-&gt;3)-alpha-D-galactosyl-1-diphospho-di-trans,octa-cis-undecaprenol + dTDP + H(+). It participates in bacterial outer membrane biogenesis; LPS O-antigen biosynthesis. Functionally, rhamnosyltransferase involved in the biosynthesis of the repeat unit of the lipopolysaccharide (LPS) O-antigen region. Catalyzes the addition of a rhamnose to the galactosyl-undecaprenyl diphosphate intermediate. The protein is O-antigen chain rhamnosyltransferase WbaN of Salmonella anatum.